Here is a 246-residue protein sequence, read N- to C-terminus: tRNA pseudouridine synthase A (246 aa).

The Nucleophile role is filled by aspartate 52. Tyrosine 111 lines the substrate pocket.

This sequence belongs to the tRNA pseudouridine synthase TruA family. In terms of assembly, homodimer.

It carries out the reaction uridine(38/39/40) in tRNA = pseudouridine(38/39/40) in tRNA. Its function is as follows. Formation of pseudouridine at positions 38, 39 and 40 in the anticodon stem and loop of transfer RNAs. This is tRNA pseudouridine synthase A from Ehrlichia ruminantium (strain Welgevonden).